We begin with the raw amino-acid sequence, 599 residues long: Sulfite reductase [NADPH] flavoprotein alpha-component (599 aa).

In terms of domain architecture, Flavodoxin-like spans 64–202; sequence ITIISASQTG…AASEWRARVV (139 aa). FMN contacts are provided by residues 70–75, 117–120, and 153–162; these read SQTGNA, STQG, and LGDSSYEFFC. In terms of domain architecture, FAD-binding FR-type spans 234–448; sequence DAPLVASLSV…IEHNDNFRLP (215 aa). FAD is bound by residues threonine 322, alanine 356, 386 to 389, 404 to 406, tyrosine 410, and 419 to 422; these read RLYS, TVG, and GGAS. NADP(+)-binding positions include 519 to 520, 525 to 529, and aspartate 561; these read SR and KVYVQ. Tyrosine 599 provides a ligand contact to FAD.

It belongs to the NADPH-dependent sulphite reductase flavoprotein subunit CysJ family. In the N-terminal section; belongs to the flavodoxin family. The protein in the C-terminal section; belongs to the flavoprotein pyridine nucleotide cytochrome reductase family. Alpha(8)-beta(8). The alpha component is a flavoprotein, the beta component is a hemoprotein. FAD serves as cofactor. It depends on FMN as a cofactor.

It catalyses the reaction hydrogen sulfide + 3 NADP(+) + 3 H2O = sulfite + 3 NADPH + 4 H(+). It participates in sulfur metabolism; hydrogen sulfide biosynthesis; hydrogen sulfide from sulfite (NADPH route): step 1/1. Its function is as follows. Component of the sulfite reductase complex that catalyzes the 6-electron reduction of sulfite to sulfide. This is one of several activities required for the biosynthesis of L-cysteine from sulfate. The flavoprotein component catalyzes the electron flow from NADPH -&gt; FAD -&gt; FMN to the hemoprotein component. This is Sulfite reductase [NADPH] flavoprotein alpha-component from Shigella boydii serotype 4 (strain Sb227).